Reading from the N-terminus, the 130-residue chain is RutC family protein in leuC 5'region (130 aa).

Belongs to the RutC family.

This Leuconostoc mesenteroides subsp. cremoris protein is RutC family protein in leuC 5'region.